Here is a 79-residue protein sequence, read N- to C-terminus: Translational regulator CsrA (79 aa).

This sequence belongs to the CsrA/RsmA family. Homodimer; the beta-strands of each monomer intercalate to form a hydrophobic core, while the alpha-helices form wings that extend away from the core.

The protein localises to the cytoplasm. Its function is as follows. A translational regulator that binds mRNA to regulate translation initiation and/or mRNA stability. Usually binds in the 5'-UTR at or near the Shine-Dalgarno sequence preventing ribosome-binding, thus repressing translation. Its main target seems to be the major flagellin gene, while its function is anatagonized by FliW. The sequence is that of Translational regulator CsrA from Syntrophus aciditrophicus (strain SB).